The chain runs to 129 residues: UPF0325 protein ESA_03178 (129 aa).

The protein belongs to the UPF0325 family.

In Cronobacter sakazakii (strain ATCC BAA-894) (Enterobacter sakazakii), this protein is UPF0325 protein ESA_03178.